The following is a 142-amino-acid chain: Acidic phospholipase A2 PA4 (142 aa).

Residues tryptophan 10, glycine 12, and glycine 14 each coordinate Ca(2+). Cystine bridges form between cysteine 11–cysteine 33, cysteine 32–cysteine 72, and cysteine 39–cysteine 65. Histidine 36 is a catalytic residue. Aspartate 37 is a Ca(2+) binding site.

This sequence belongs to the phospholipase A2 family. Group III subfamily. Ca(2+) serves as cofactor. In terms of tissue distribution, expressed by the venom gland.

The protein localises to the secreted. It catalyses the reaction a 1,2-diacyl-sn-glycero-3-phosphocholine + H2O = a 1-acyl-sn-glycero-3-phosphocholine + a fatty acid + H(+). Its function is as follows. PLA2 catalyzes the calcium-dependent hydrolysis of the 2-acyl groups in 3-sn-phosphoglycerides. This Heloderma suspectum (Gila monster) protein is Acidic phospholipase A2 PA4.